Consider the following 360-residue polypeptide: DNA replication and repair protein RecF (360 aa).

33-40 provides a ligand contact to ATP; sequence GENGSGKT.

It belongs to the RecF family.

The protein resides in the cytoplasm. In terms of biological role, the RecF protein is involved in DNA metabolism; it is required for DNA replication and normal SOS inducibility. RecF binds preferentially to single-stranded, linear DNA. It also seems to bind ATP. The chain is DNA replication and repair protein RecF from Rickettsia canadensis (strain McKiel).